The chain runs to 54 residues: Potassium channel toxin alpha-KTx 14.2 (54 aa).

The first 23 residues, 1-23 (MKIFFAILLILAVCSMAIWTVNG), serve as a signal peptide directing secretion. Cystine bridges form between C30/C46, C36/C51, and C40/C53.

Belongs to the short scorpion toxin superfamily. Potassium channel inhibitor family. Alpha-KTx 14 subfamily. As to expression, expressed by the venom gland.

Its subcellular location is the secreted. Inhibits potassium channels. May be active towards small conductance calcium-activated potassium channels (KCNN, SK), and less active towards voltage-gated potassium channels (Kv/KCN). This is Potassium channel toxin alpha-KTx 14.2 from Olivierus martensii (Manchurian scorpion).